Consider the following 248-residue polypeptide: UPF0246 protein A1G_03985 (248 aa).

It belongs to the UPF0246 family.

In Rickettsia rickettsii (strain Sheila Smith), this protein is UPF0246 protein A1G_03985.